The primary structure comprises 1219 residues: Pleckstrin homology domain-containing family G member 3 (1219 aa).

A compositionally biased stretch (polar residues) spans 1–10 (MPVSTSLHQD). A disordered region spans residues 1–66 (MPVSTSLHQD…HLPNSNNNSS (66 aa)). The span at 18–46 (SLTSTTSSSGSSCDSRSAMEEPSSSEAPA) shows a compositional bias: low complexity. Phosphoserine is present on S76. The DH domain maps to 93 to 272 (YLGRVVREIV…TCVAWYINDM (180 aa)). The PH domain maps to 296-394 (DLTTYGELVL…WTHHIKRLIL (99 aa)). Polar residues predominate over residues 431–442 (WSSQDEVSTNVR). Disordered stretches follow at residues 431–599 (WSSQ…PSVL) and 613–708 (FSRR…KESA). At S433 the chain carries Phosphoserine. Residues 446 to 463 (RQSEPTKHLLRQLNEKAR) are compositionally biased toward basic and acidic residues. S576, S577, S618, S631, S640, S643, and S647 each carry phosphoserine. A compositionally biased stretch (low complexity) spans 630–645 (GSPRLVSRSSSVLSLE). The segment covering 696–708 (EPDRSSCKKKESA) has biased composition (basic and acidic residues). Phosphoserine occurs at positions 741, 779, and 827. Disordered stretches follow at residues 756–780 (RFNS…VGSR), 821–840 (MESS…ANGF), 859–878 (EESA…RSPA), 955–1133 (APER…LYVT), and 1146–1207 (VMEK…RVRN). Positions 826–836 (GSPGKGPGQGQ) are enriched in gly residues. Residues 859–873 (EESATASPESSSPTE) show a composition bias toward low complexity. 5 positions are modified to phosphoserine: S962, S1011, S1023, S1037, and S1040. A compositionally biased stretch (polar residues) spans 1020 to 1029 (SAVSQRTTSP). Residues 1049–1065 (DVRELCSKYASRDEARR) show a composition bias toward basic and acidic residues. S1081 carries the phosphoserine modification. The residue at position 1107 (R1107) is an Omega-N-methylarginine. Residues 1187 to 1197 (QPKEEGSRDPA) show a composition bias toward basic and acidic residues.

The protein resides in the cytoplasm. It localises to the cytoskeleton. Plays a role in controlling cell polarity and cell motility by selectively binding newly polymerized actin and activating RAC1 and CDC42 to enhance local actin polymerization. In Homo sapiens (Human), this protein is Pleckstrin homology domain-containing family G member 3.